A 244-amino-acid polypeptide reads, in one-letter code: Probable Ni/Fe-hydrogenase B-type cytochrome subunit (244 aa).

The next 4 helical transmembrane spans lie at 39–59, 73–93, 150–171, and 204–221; these read LWHW…FFIG, FLMG…AIGM, FAMF…FAMY, and LGMW…YAAI.

Belongs to the HupC/HyaC/HydC family.

The protein localises to the cell membrane. Functionally, probable b-type cytochrome. This chain is Probable Ni/Fe-hydrogenase B-type cytochrome subunit (hoxZ), found in Cupriavidus necator (strain ATCC 17699 / DSM 428 / KCTC 22496 / NCIMB 10442 / H16 / Stanier 337) (Ralstonia eutropha).